Reading from the N-terminus, the 249-residue chain is Receptor-transporting protein 4 (249 aa).

Topologically, residues 1–227 (MLFPDDFSTW…QGCREPPQRE (227 aa)) are cytoplasmic. Residues 50–162 (TVLGRFQCSR…DTRNCEACSL (113 aa)) form a 3CxxC-type zinc finger. Residues 173–208 (KVKPPRSPSPLPKSSSPSKSCPPPPQTRNTDFGNKT) are disordered. Polar residues predominate over residues 199–208 (TRNTDFGNKT). A helical membrane pass occupies residues 228 to 248 (IEPPLFLFLSIAAFALFSLFT).

Belongs to the TMEM7 family. Interacts with TASR16. Interacts with OPRD1 and OPRM1; the interaction promotes cell surface localization of the OPDR1-OPRM1 heterodimer. As to expression, expressed at low levels in olfactory neurons. Upon viral infection, highly expressed in brain and different cells of nervous tissue.

The protein resides in the membrane. Its subcellular location is the cytoplasm. In terms of biological role, chaperone protein that facilitates the trafficking and functional cell surface expression of some G-protein coupled receptors (GPCRs). Promotes functional expression of the bitter taste receptor TAS2R16. Also promotes functional expression of the opioid receptor heterodimer OPRD1-OPRM1. In addition, acts as a potent IFN-inducible suppressor of pathogens including lyssavirus rabies, influenza A or yellow fever virus. Mechanistically, associates with the viral replicase, binds viral RNA, and thereby suppresses viral genome amplification that replicates at the endoplasmic reticulum. In addition, restores antiviral signaling by interacting with and sequestering influenza virus protein NS1. This is Receptor-transporting protein 4 (Rtp4) from Mus musculus (Mouse).